A 1384-amino-acid polypeptide reads, in one-letter code: DNA-directed RNA polymerase subunit beta (1384 aa).

It belongs to the RNA polymerase beta chain family. The RNAP catalytic core consists of 2 alpha, 1 beta, 1 beta' and 1 omega subunit. When a sigma factor is associated with the core the holoenzyme is formed, which can initiate transcription.

It catalyses the reaction RNA(n) + a ribonucleoside 5'-triphosphate = RNA(n+1) + diphosphate. Its function is as follows. DNA-dependent RNA polymerase catalyzes the transcription of DNA into RNA using the four ribonucleoside triphosphates as substrates. The polypeptide is DNA-directed RNA polymerase subunit beta (Xylella fastidiosa (strain M12)).